We begin with the raw amino-acid sequence, 390 residues long: Ammonium/H(+) antiporter subunit AmhT (390 aa).

10 helical membrane-spanning segments follow: residues 2–22 (VIPELFSAGLILLLLFITGFV), 31–51 (VVIFILLGIAVGGLLSGSHLL), 52–72 (HFAGEVGIVLLFFMLGMEFPL), 94–114 (FGVTMAICMMMGLDVITSLII), 143–163 (FMLGLLIFEDLVAPILVAVLV), 178–198 (LLVVKVVALVAGAVILGVFLF), 212–232 (DLFILFVIGLALMYGGLALYL), 266–286 (LLLPLFFLYFGTTISFSEGIP), 288–308 (IPLLILVLVWSVIAKVIVGVL), and 351–371 (VFILASAMIGILLFQFAPSIA).

It belongs to the monovalent cation:proton antiporter 2 (CPA2) transporter (TC 2.A.37) family. As to quaternary structure, interacts with AmhM.

Its subcellular location is the cell membrane. Its activity is regulated as follows. AmhT alone exhibits antiport activity, but interaction with AmhM confers different properties, such as higher KM for potassium. In terms of biological role, ammonium/proton antiporter that mediates the efflux of ammonium ions. Can also transport potassium or rubidium, but not sodium or lithium. The polypeptide is Ammonium/H(+) antiporter subunit AmhT (amhT) (Alkalihalophilus pseudofirmus (strain ATCC BAA-2126 / JCM 17055 / OF4) (Bacillus pseudofirmus)).